A 208-amino-acid polypeptide reads, in one-letter code: Thioredoxin domain-containing protein 9 (208 aa).

One can recognise a Thioredoxin domain in the interval 68 to 179; that stretch reads YEEVADEKEF…MENRLARSEV (112 aa).

As to expression, expressed throughout the body with high expression in the nervous system, including the ventral nerve cord and tail neurons, and vulva.

Its subcellular location is the nucleus. The protein localises to the cytoplasm. In terms of biological role, required for normal microtubule organization and function. Regulates tubulin acetylation in ALM and PLM neurons. This chain is Thioredoxin domain-containing protein 9, found in Caenorhabditis elegans.